A 236-amino-acid chain; its full sequence is UPF0502 protein Bcep1808_3727 (236 aa).

It belongs to the UPF0502 family.

This is UPF0502 protein Bcep1808_3727 from Burkholderia vietnamiensis (strain G4 / LMG 22486) (Burkholderia cepacia (strain R1808)).